The chain runs to 149 residues: Nucleoside diphosphate kinase 1 (149 aa).

Methionine 1 bears the N-acetylmethionine mark. Residues lysine 9, phenylalanine 57, arginine 85, threonine 91, arginine 102, and asparagine 112 each contribute to the ATP site. Histidine 115 (pros-phosphohistidine intermediate) is an active-site residue.

The protein belongs to the NDK family. Interacts with CAT1, CAT2 and CAT3. Requires Mg(2+) as cofactor.

The protein localises to the peroxisome. It localises to the nucleus. The protein resides in the cytoplasm. It catalyses the reaction a 2'-deoxyribonucleoside 5'-diphosphate + ATP = a 2'-deoxyribonucleoside 5'-triphosphate + ADP. The catalysed reaction is a ribonucleoside 5'-diphosphate + ATP = a ribonucleoside 5'-triphosphate + ADP. Its function is as follows. Major role in the synthesis of nucleoside triphosphates other than ATP. The ATP gamma phosphate is transferred to the NDP beta phosphate via a ping-pong mechanism, using a phosphorylated active-site intermediate. Plays a role in response to reactive oxygen species (ROS) stress. The chain is Nucleoside diphosphate kinase 1 (NDK1) from Arabidopsis thaliana (Mouse-ear cress).